Consider the following 196-residue polypeptide: 3-isopropylmalate dehydratase small subunit (196 aa).

The protein belongs to the LeuD family. LeuD type 1 subfamily. As to quaternary structure, heterodimer of LeuC and LeuD.

The catalysed reaction is (2R,3S)-3-isopropylmalate = (2S)-2-isopropylmalate. Its pathway is amino-acid biosynthesis; L-leucine biosynthesis; L-leucine from 3-methyl-2-oxobutanoate: step 2/4. Its function is as follows. Catalyzes the isomerization between 2-isopropylmalate and 3-isopropylmalate, via the formation of 2-isopropylmaleate. This is 3-isopropylmalate dehydratase small subunit from Streptococcus gordonii (strain Challis / ATCC 35105 / BCRC 15272 / CH1 / DL1 / V288).